Consider the following 146-residue polypeptide: MASNIIMFEDIFVVDKLDPDGKKFDKVTRVEARSHNLEMFMHLDVNTEVYPLAVGDKFTLAMAPTLNLDGTPDTGYFTPGAKKTLADKYEYIMHGKLYKISERDGKTPKAELYVSFGGLLMLLQGDPAHISHFELDQRLFLLMRKL.

This sequence belongs to the eukaryotic RPB8 RNA polymerase subunit family. As to quaternary structure, component of the RNA polymerase II, IV and V complexes. Associates with the mediator complex.

The protein resides in the nucleus. In terms of biological role, DNA-dependent RNA polymerase catalyzes the transcription of DNA into RNA using the four ribonucleoside triphosphates as substrates. Component of RNA polymerase II which synthesizes mRNA precursors and many functional non-coding RNAs. Pol II is the central component of the basal RNA polymerase II transcription machinery. It is composed of mobile elements that move relative to each other. Component of RNA polymerases IV and V which mediate short-interfering RNAs (siRNA) accumulation and subsequent RNA-directed DNA methylation-dependent (RdDM) transcriptional gene silencing (TGS) of endogenous repeated sequences, including transposable elements. The chain is DNA-directed RNA polymerases II, IV and V subunit 8B (NRPB8B) from Arabidopsis thaliana (Mouse-ear cress).